The primary structure comprises 502 residues: ATP synthase subunit alpha (502 aa).

169-176 contacts ATP; it reads GDRQTGKT.

The protein belongs to the ATPase alpha/beta chains family. As to quaternary structure, F-type ATPases have 2 components, CF(1) - the catalytic core - and CF(0) - the membrane proton channel. CF(1) has five subunits: alpha(3), beta(3), gamma(1), delta(1), epsilon(1). CF(0) has three main subunits: a(1), b(2) and c(9-12). The alpha and beta chains form an alternating ring which encloses part of the gamma chain. CF(1) is attached to CF(0) by a central stalk formed by the gamma and epsilon chains, while a peripheral stalk is formed by the delta and b chains.

The protein resides in the cell inner membrane. The catalysed reaction is ATP + H2O + 4 H(+)(in) = ADP + phosphate + 5 H(+)(out). In terms of biological role, produces ATP from ADP in the presence of a proton gradient across the membrane. The alpha chain is a regulatory subunit. The sequence is that of ATP synthase subunit alpha from Trichlorobacter lovleyi (strain ATCC BAA-1151 / DSM 17278 / SZ) (Geobacter lovleyi).